A 589-amino-acid polypeptide reads, in one-letter code: Putative phospholipase B-like 2 (589 aa).

The first 41 residues, 1–41 (MVAPMYGSPGGRLARAVTRALALALVLALLVGLFLSGLTGA), serve as a signal peptide directing secretion. 2 N-linked (GlcNAc...) asparagine glycosylation sites follow: Asn88 and Asn110. A disulfide bridge links Cys142 with Cys152. N-linked (GlcNAc...) asparagine glycans are attached at residues Asn174, Asn231, Asn436, and Asn465. Cys492 and Cys495 form a disulfide bridge. The N-linked (GlcNAc...) asparagine glycan is linked to Asn515.

The protein belongs to the phospholipase B-like family. As to quaternary structure, interacts with IGF2R. In terms of processing, glycosylated; contains mannose 6-phosphate sugars.

The protein localises to the lysosome lumen. Functionally, putative phospholipase. This is Putative phospholipase B-like 2 (PLBD2) from Bos taurus (Bovine).